Reading from the N-terminus, the 931-residue chain is Dual serine/threonine and tyrosine protein kinase (931 aa).

The disordered stretch occupies residues 1-24; sequence MEGDAPQRVSERVSGPGPGGGGGG. Positions 397 to 424 form a coiled coil; the sequence is RKKENELYESLMNIANRKQEEMKDMICE. Residues 654–908 enclose the Protein kinase domain; sequence PKLGQELGRG…PLLGIVQPML (255 aa). Residues 660-668 and K683 contribute to the ATP site; that span reads LGRGQYGVV. D779 (proton acceptor) is an active-site residue.

This sequence belongs to the protein kinase superfamily. Ser/Thr protein kinase family.

It is found in the cytoplasm. It localises to the cell membrane. The protein localises to the apical cell membrane. Its subcellular location is the basolateral cell membrane. The protein resides in the cell junction. It catalyses the reaction L-seryl-[protein] + ATP = O-phospho-L-seryl-[protein] + ADP + H(+). The catalysed reaction is L-threonyl-[protein] + ATP = O-phospho-L-threonyl-[protein] + ADP + H(+). It carries out the reaction L-tyrosyl-[protein] + ATP = O-phospho-L-tyrosyl-[protein] + ADP + H(+). Its function is as follows. Acts as a positive regulator of ERK phosphorylation downstream of fibroblast growth factor-receptor activation. Involved in the regulation of both caspase-dependent apoptosis and caspase-independent cell death. In the skin, it plays a predominant role in suppressing caspase-dependent apoptosis in response to UV stress in a range of dermal cell types. The sequence is that of Dual serine/threonine and tyrosine protein kinase (DSTYK) from Canis lupus familiaris (Dog).